Here is a 349-residue protein sequence, read N- to C-terminus: Hydroxymethylglutaryl-CoA synthase (349 aa).

A (3S)-3-hydroxy-3-methylglutaryl-CoA-binding site is contributed by Asp-30. Glu-82 serves as the catalytic Proton donor/acceptor. Cys-114 is a (3S)-3-hydroxy-3-methylglutaryl-CoA binding site. The Acyl-thioester intermediate role is filled by Cys-114. CoA is bound at residue Arg-203. Thr-205 and His-238 together coordinate (3S)-3-hydroxy-3-methylglutaryl-CoA. His-238 functions as the Proton donor/acceptor in the catalytic mechanism. Lys-243 is a binding site for CoA. Positions 247, 270, and 300 each coordinate (3S)-3-hydroxy-3-methylglutaryl-CoA.

Belongs to the thiolase-like superfamily. Archaeal HMG-CoA synthase family. As to quaternary structure, interacts with acetoacetyl-CoA thiolase that catalyzes the precedent step in the pathway and with a DUF35 protein. The acetoacetyl-CoA thiolase/HMG-CoA synthase complex channels the intermediate via a fused CoA-binding site, which allows for efficient coupling of the endergonic thiolase reaction with the exergonic HMGCS reaction.

It carries out the reaction acetoacetyl-CoA + acetyl-CoA + H2O = (3S)-3-hydroxy-3-methylglutaryl-CoA + CoA + H(+). The protein operates within metabolic intermediate biosynthesis; (R)-mevalonate biosynthesis; (R)-mevalonate from acetyl-CoA: step 2/3. In terms of biological role, catalyzes the condensation of acetyl-CoA with acetoacetyl-CoA to form 3-hydroxy-3-methylglutaryl-CoA (HMG-CoA). Functions in the mevalonate (MVA) pathway leading to isopentenyl diphosphate (IPP), a key precursor for the biosynthesis of isoprenoid compounds that are building blocks of archaeal membrane lipids. This Methanothermococcus thermolithotrophicus (Methanococcus thermolithotrophicus) protein is Hydroxymethylglutaryl-CoA synthase.